Consider the following 179-residue polypeptide: MASMHEALFSSRLLQVNSSFSFRCALPIISSPAAVSCAIKSTQFFKQRCRTKVRDFSLSSLSRRGFVCRAAEYKFPDPIPEFAEAETEKFRDHMLNKLSKRDLFEDSVDEIVGVCTEIFETFLRSEYGGPGTLLVIPFIDMADTLNERELPGGPQAARAAIKWAQDHVDKDWKEWTGTD.

A chloroplast-targeting transit peptide spans 1 to 69; it reads MASMHEALFS…SLSRRGFVCR (69 aa).

In terms of assembly, binds DNA when in complex with CSP41b.

The protein localises to the plastid. The protein resides in the chloroplast stroma. Its subcellular location is the chloroplast nucleoid. In terms of biological role, involved in redox-mediated retrograde signaling to synchronize the expression of photosynthetic genes from both the nuclear and plastidic genomes, especially in excess light conditions. Required for full expression of genes transcribed by the plastid-encoded RNA polymerase (PEP). Essential for embryo development. In Arabidopsis thaliana (Mouse-ear cress), this protein is Protein PLASTID REDOX INSENSITIVE 2, chloroplastic.